The chain runs to 276 residues: Putative olfactory receptor 10J6 (276 aa).

Residues 1-25 (MRRKNLTEVTEFVFLGFSRFHKHHI) are Extracellular-facing. Residue N5 is glycosylated (N-linked (GlcNAc...) asparagine). Residues 26–46 (TLFVVFLILYTLTVAGNAIIM) traverse the membrane as a helical segment. Topologically, residues 47–54 (TIICIDRH) are cytoplasmic. The chain crosses the membrane as a helical span at residues 55-75 (LHTPMYFFLSMLASSKTVYTL). Residues 76-99 (FIIPQMLSSFVTQTQPISLAGCTT) lie on the Extracellular side of the membrane. A disulfide bridge links C97 with C188. The chain crosses the membrane as a helical span at residues 100-120 (QTFFFVTLAINNCFLLTVMGY). Over 121-139 (DHYMAICNPLRYRVITSKK) the chain is Cytoplasmic. Residues 140–160 (VCVQLVCGAFSIGLAMAAVQV) traverse the membrane as a helical segment. The Extracellular portion of the chain corresponds to 161-196 (TSIFTLPFCHTVVGHFFCDILPVMKLSCINTTINEI). N-linked (GlcNAc...) asparagine glycosylation is present at N190. Residues 197 to 216 (INFVVRLFVILVPMGLVFIS) form a helical membrane-spanning segment. The Cytoplasmic portion of the chain corresponds to 217-236 (YVLIISTVLKIASAEGWKKT). The helical transmembrane segment at 237-257 (FATCAFHLTVVIVHYGCASIA) threads the bilayer. At 258 to 270 (YLMPKSENSIEQD) the chain is on the extracellular side. The chain crosses the membrane as a helical span at residues 271–276 (LLLSVT).

The protein belongs to the G-protein coupled receptor 1 family.

The protein localises to the cell membrane. Its function is as follows. Odorant receptor. The chain is Putative olfactory receptor 10J6 (OR10J6P) from Homo sapiens (Human).